A 205-amino-acid chain; its full sequence is MLQQDSNDDTEDVSLFDAEEETTNRPRKAKIRHPVASFFHLFFRVSAIIVYLLCELLSSSFITCMVTIILLLSCDFWAVKNVTGRLMVGLRWWNHIDEDGKSHWVFESRKESSQENKTVSEAESRIFWLGLIACPVLWVIFAFSALFSFRVKWLAVVIMGVVLQGANLYGYIRCKVGSRKNLTSMATSYFGKQFLRQNTGDDQTS.

The residue at position 1 (methionine 1) is an N-acetylmethionine. The interval 1-21 is disordered; that stretch reads MLQQDSNDDTEDVSLFDAEEE. 4 consecutive transmembrane segments (helical) span residues 34-53, 54-72, 126-146, and 152-172; these read PVAS…VYLL, CELL…ILLL, IFWL…FSAL, and KWLA…YGYI.

It belongs to the TVP23 family.

The protein localises to the membrane. The sequence is that of Golgi apparatus membrane protein TVP23 homolog B (TVP23B) from Pongo abelii (Sumatran orangutan).